A 506-amino-acid polypeptide reads, in one-letter code: Glutamate--tRNA ligase (506 aa).

The 'HIGH' region motif lies at Pro-12–Thr-22. Residues Lys-253–Arg-257 carry the 'KMSKS' region motif. Lys-256 contributes to the ATP binding site.

It belongs to the class-I aminoacyl-tRNA synthetase family. Glutamate--tRNA ligase type 1 subfamily. As to quaternary structure, monomer.

It is found in the cytoplasm. The catalysed reaction is tRNA(Glu) + L-glutamate + ATP = L-glutamyl-tRNA(Glu) + AMP + diphosphate. Catalyzes the attachment of glutamate to tRNA(Glu) in a two-step reaction: glutamate is first activated by ATP to form Glu-AMP and then transferred to the acceptor end of tRNA(Glu). The polypeptide is Glutamate--tRNA ligase (Chlamydia trachomatis serovar A (strain ATCC VR-571B / DSM 19440 / HAR-13)).